Reading from the N-terminus, the 100-residue chain is NADH-quinone oxidoreductase subunit K 1 (100 aa).

3 helical membrane passes run 4-24 (LNNY…GVLV), 29-49 (IVIF…FIAF), and 60-80 (IFVF…LALM).

It belongs to the complex I subunit 4L family. In terms of assembly, NDH-1 is composed of 14 different subunits. Subunits NuoA, H, J, K, L, M, N constitute the membrane sector of the complex.

The protein resides in the cell inner membrane. It carries out the reaction a quinone + NADH + 5 H(+)(in) = a quinol + NAD(+) + 4 H(+)(out). Its function is as follows. NDH-1 shuttles electrons from NADH, via FMN and iron-sulfur (Fe-S) centers, to quinones in the respiratory chain. The immediate electron acceptor for the enzyme in this species is believed to be ubiquinone. Couples the redox reaction to proton translocation (for every two electrons transferred, four hydrogen ions are translocated across the cytoplasmic membrane), and thus conserves the redox energy in a proton gradient. This is NADH-quinone oxidoreductase subunit K 1 from Geotalea daltonii (strain DSM 22248 / JCM 15807 / FRC-32) (Geobacter daltonii).